We begin with the raw amino-acid sequence, 480 residues long: REST corepressor 1 (480 aa).

The tract at residues 1–105 is disordered; sequence MPAMVEKGPE…GGGMRVGPQY (105 aa). Composition is skewed to low complexity over residues 21-58 and 66-89; these read AASA…AAAA and SLAA…SGSS. Residues 72–251 are interaction with HDAC1; sequence PNGNSGSNSW…RHARKQKRER (180 aa). The region spanning 97–183 is the ELM2 domain; sequence GGMRVGPQYQ…KSLADLPNFT (87 aa). Residue K116 forms a Glycyl lysine isopeptide (Lys-Gly) (interchain with G-Cter in SUMO2) linkage. S121 carries the phosphoserine modification. The region spanning 184–235 is the SANT 1 domain; the sequence is PFPDEWTVEDKVLFEQAFSFHGKTFHRIQQMLPDKSIASLVKFYYSWKKTRT. The stretch at 238-265 forms a coiled coil; the sequence is SVMDRHARKQKREREESEDELEETNGSN. The segment at 238 to 308 is disordered; sequence SVMDRHARKQ…AKNRAKRKPP (71 aa). S254 carries the phosphoserine modification. Residues 272–282 show a composition bias toward basic and acidic residues; the sequence is DPNKESKKEVP. The interaction with KDM1A stretch occupies residues 290 to 378; that stretch reads VKKEKHSTQA…LPEVIQKCNA (89 aa). A Glycyl lysine isopeptide (Lys-Gly) (interchain with G-Cter in SUMO2) cross-link involves residue K291. Residues 328–363 are a coiled coil; that stretch reads ATTVLRQLDMELVSIKRQIQNIKQTNSALKEKLDGG. In terms of domain architecture, SANT 2 spans 375 to 426; that stretch reads KCNARWTTEEQLLAVQAIRKYGRDFQAISDVIGNKSVVQVKNFFVNYRRRFN. Positions 436 to 466 are disordered; that stretch reads AEHGKDETNGPANQKPVKSPESSIKIPEEED. A Phosphoserine modification is found at S454. A Glycyl lysine isopeptide (Lys-Gly) (interchain with G-Cter in SUMO2) cross-link involves residue K460.

This sequence belongs to the CoREST family. As to quaternary structure, component of a BHC histone deacetylase complex that contains HDAC1, HDAC2, HMG20B/BRAF35, KDM1A, RCOR1/CoREST and PHF21A/BHC80. The BHC complex may also contain ZMYM2, ZNF217, ZMYM3, GSE1 and GTF2I. Interacts with REST. Interacts with the SMARCE1/BAF57, suggesting that the BHC complex may recruit the ATP-dependent chromatin-remodeling SWI-SNF complex. Interacts directly with GFI1 and GFI1B in a RCOR/GFI/KDM1A/HDAC complex. Interacts with INMS1. Interacts with SOX2. As to expression, expressed in the external germinal layer (EGL) and internal granular layer (IGL) of the cerebellum and in Purkinje cells (at protein level).

It localises to the nucleus. In terms of biological role, essential component of the BHC complex, a corepressor complex that represses transcription of neuron-specific genes in non-neuronal cells. The BHC complex is recruited at RE1/NRSE sites by REST and acts by deacetylating and demethylating specific sites on histones, thereby acting as a chromatin modifier. In the BHC complex, it serves as a molecular beacon for the recruitment of molecular machinery, including MeCP2 and SUV39H1, that imposes silencing across a chromosomal interval. Plays a central role in demethylation of Lys-4 of histone H3 by promoting demethylase activity of KDM1A on core histones and nucleosomal substrates. It also protects KDM1A from the proteasome. Component of a RCOR/GFI/KDM1A/HDAC complex that suppresses, via histone deacetylase (HDAC) recruitment, a number of genes implicated in multilineage blood cell development and controls hematopoietic differentiation. In Mus musculus (Mouse), this protein is REST corepressor 1 (Rcor1).